A 476-amino-acid polypeptide reads, in one-letter code: Cytochrome P450 6B5 (476 aa).

Cys-443 contacts heme.

It belongs to the cytochrome P450 family. Heme serves as cofactor.

The protein resides in the endoplasmic reticulum membrane. Its subcellular location is the microsome membrane. It carries out the reaction an organic molecule + reduced [NADPH--hemoprotein reductase] + O2 = an alcohol + oxidized [NADPH--hemoprotein reductase] + H2O + H(+). Its function is as follows. Enables the insect to feed on furanocoumarin-producing plants and evolved as an adaptation for detoxification of xanthotoxin and other furanocoumarins. The chain is Cytochrome P450 6B5 (CYP6B5) from Papilio glaucus (Eastern tiger swallowtail butterfly).